We begin with the raw amino-acid sequence, 394 residues long: MPDKFKRVHVIVMDSVGIGEAPDAAKFGDFDVDTFGHIAKHVGGLKMPEMGKLGLSNIREIEGIEKAEKPLAYYTKMQEASNGKDTMTGHWEIMGLYIDTPFRVFPDGFPDDLINQIEAKTGRKVIGNKPASGTEIMAELGEEHVKTGALIVYTSADSVLQIAAHEDVVPLEELYEICEFCREITLDDPYMLGRIIARPFVGEPGAFVRTPNRHDYALKPFKPTVMDALKDGGKDVIAIGKISDIFDGEGVTESIRTKSNMDGMDQFIDVLDKDFNGMSFLNLVDFDALFGHRRDPQGYADALVDFDGRLVEVMEKLTDDDLLIITADHGNDPTYTGTDHTREFVPLLVYSPRFKNGGSELELRQTFADLGATVADNFDVKMPEYGKSFLKDLK.

Residues D14, D287, H292, D328, H329, and H340 each contribute to the Mn(2+) site.

Belongs to the phosphopentomutase family. It depends on Mn(2+) as a cofactor.

The protein resides in the cytoplasm. The enzyme catalyses 2-deoxy-alpha-D-ribose 1-phosphate = 2-deoxy-D-ribose 5-phosphate. It carries out the reaction alpha-D-ribose 1-phosphate = D-ribose 5-phosphate. It participates in carbohydrate degradation; 2-deoxy-D-ribose 1-phosphate degradation; D-glyceraldehyde 3-phosphate and acetaldehyde from 2-deoxy-alpha-D-ribose 1-phosphate: step 1/2. Functionally, isomerase that catalyzes the conversion of deoxy-ribose 1-phosphate (dRib-1-P) and ribose 1-phosphate (Rib-1-P) to deoxy-ribose 5-phosphate (dRib-5-P) and ribose 5-phosphate (Rib-5-P), respectively. In Listeria innocua serovar 6a (strain ATCC BAA-680 / CLIP 11262), this protein is Phosphopentomutase.